The chain runs to 503 residues: Protein FAM124A (503 aa).

Positions 434–470 (LAQSDTVPGRQNHSSDSLHSVSDISSSPCPVFPSTPA) are disordered. The span at 436–445 (QSDTVPGRQN) shows a compositional bias: polar residues. Positions 447-460 (SSDSLHSVSDISSS) are enriched in low complexity.

The protein belongs to the FAM124 family.

This chain is Protein FAM124A (fam124a), found in Xenopus tropicalis (Western clawed frog).